We begin with the raw amino-acid sequence, 124 residues long: Small ribosomal subunit protein uS12 (124 aa).

Disordered regions lie at residues 9–32 (RKGRRDKVAKTKTAALKGSPQRRG) and 105–124 (QGVKNRKQARSRYGAKKEKS). Basic residues predominate over residues 108–118 (KNRKQARSRYG).

The protein belongs to the universal ribosomal protein uS12 family. In terms of assembly, part of the 30S ribosomal subunit. Contacts proteins S8 and S17. May interact with IF1 in the 30S initiation complex.

Functionally, with S4 and S5 plays an important role in translational accuracy. Interacts with and stabilizes bases of the 16S rRNA that are involved in tRNA selection in the A site and with the mRNA backbone. Located at the interface of the 30S and 50S subunits, it traverses the body of the 30S subunit contacting proteins on the other side and probably holding the rRNA structure together. The combined cluster of proteins S8, S12 and S17 appears to hold together the shoulder and platform of the 30S subunit. The chain is Small ribosomal subunit protein uS12 from Nocardia farcinica (strain IFM 10152).